The sequence spans 434 residues: F-box/kelch-repeat protein At1g55270 (434 aa).

The 47-residue stretch at 76 to 122 folds into the F-box domain; sequence PPLLPGLPDDLAVACLIRVPRAEHRKLRLVCKRWYRLASGNFFYSQR. Kelch repeat units follow at residues 129 to 178, 180 to 227, 229 to 276, 278 to 321, and 325 to 371; these read EEWV…VLSG, HLYL…VINN, LYVA…VYDK, WFLK…SLNG, and GLDC…LHNK.

The sequence is that of F-box/kelch-repeat protein At1g55270 from Arabidopsis thaliana (Mouse-ear cress).